The following is a 438-amino-acid chain: Aspartate aminotransferase, cytoplasmic (438 aa).

L-aspartate contacts are provided by G73, W167, and N220. Position 284 is an N6-(pyridoxal phosphate)lysine (K284). R412 lines the L-aspartate pocket.

Belongs to the class-I pyridoxal-phosphate-dependent aminotransferase family. Homodimer. Pyridoxal 5'-phosphate serves as cofactor.

The protein localises to the cytoplasm. The catalysed reaction is L-aspartate + 2-oxoglutarate = oxaloacetate + L-glutamate. Its function is as follows. Plays a key role in amino acid metabolism. This Dictyostelium discoideum (Social amoeba) protein is Aspartate aminotransferase, cytoplasmic (aatB).